Reading from the N-terminus, the 1224-residue chain is Coatomer subunit alpha (1224 aa).

WD repeat units lie at residues 7-37 (TKSA…QLWD), 49-79 (EHDG…KVWN), 91-121 (GHLD…RVWN), and 133-163 (GHNH…RVWD). Ser173 is subject to Phosphoserine. Thr185 carries the phosphothreonine modification. 2 WD repeats span residues 203–233 (GHDR…KIWR) and 247–277 (GHYN…RVWD). Position 591 is a phosphothreonine (Thr591). At Arg965 the chain carries Omega-N-methylarginine. A Phosphoserine modification is found at Ser1193.

As to quaternary structure, oligomeric complex that consists of at least the alpha, beta, beta', gamma, delta, epsilon and zeta subunits. Interacts with SCYL1. Interacts with JAGN1. Interacts with TMEM41B. Interacts with SVEP1. Probably interacts with PEX11A.

The protein localises to the cytoplasm. Its subcellular location is the golgi apparatus membrane. The protein resides in the cytoplasmic vesicle. It localises to the COPI-coated vesicle membrane. It is found in the secreted. Functionally, the coatomer is a cytosolic protein complex that binds to dilysine motifs and reversibly associates with Golgi non-clathrin-coated vesicles, which further mediate biosynthetic protein transport from the ER, via the Golgi up to the trans Golgi network. Coatomer complex is required for budding from Golgi membranes, and is essential for the retrograde Golgi-to-ER transport of dilysine-tagged proteins. In mammals, the coatomer can only be recruited by membranes associated to ADP-ribosylation factors (ARFs), which are small GTP-binding proteins; the complex also influences the Golgi structural integrity, as well as the processing, activity, and endocytic recycling of LDL receptors. Xenin stimulates exocrine pancreatic secretion. It inhibits pentagastrin-stimulated secretion of acid, to induce exocrine pancreatic secretion and to affect small and large intestinal motility. In the gut, xenin interacts with the neurotensin receptor. The chain is Coatomer subunit alpha (COPA) from Bos taurus (Bovine).